A 365-amino-acid polypeptide reads, in one-letter code: Probable ethanolamine-phosphate cytidylyltransferase (365 aa).

The tract at residues Glu-344–Ala-365 is disordered. A compositionally biased stretch (polar residues) spans Ala-355–Ala-365.

Belongs to the cytidylyltransferase family.

It catalyses the reaction phosphoethanolamine + CTP + H(+) = CDP-ethanolamine + diphosphate. Its pathway is phospholipid metabolism; phosphatidylethanolamine biosynthesis; phosphatidylethanolamine from ethanolamine: step 2/3. This Schizosaccharomyces pombe (strain 972 / ATCC 24843) (Fission yeast) protein is Probable ethanolamine-phosphate cytidylyltransferase.